Here is a 571-residue protein sequence, read N- to C-terminus: Glutamine--tRNA ligase (571 aa).

Positions 35–45 (PEPNGYLHIGH) match the 'HIGH' region motif. ATP contacts are provided by residues 36–38 (EPN) and 42–48 (HIGHAKS). Residues Asp68 and Tyr213 each coordinate L-glutamine. Residues Thr232, 262–263 (RL), and 270–272 (LSK) contribute to the ATP site. The 'KMSKS' region motif lies at 269–273 (ILSKR).

This sequence belongs to the class-I aminoacyl-tRNA synthetase family. In terms of assembly, monomer.

The protein localises to the cytoplasm. The catalysed reaction is tRNA(Gln) + L-glutamine + ATP = L-glutaminyl-tRNA(Gln) + AMP + diphosphate. This Buchnera aphidicola subsp. Acyrthosiphon pisum (strain APS) (Acyrthosiphon pisum symbiotic bacterium) protein is Glutamine--tRNA ligase.